We begin with the raw amino-acid sequence, 338 residues long: Glycerol-3-phosphate dehydrogenase [NAD(P)+] (338 aa).

NADPH contacts are provided by S13, W14, and K108. Sn-glycerol 3-phosphate-binding residues include K108, G139, and S141. A143 is an NADPH binding site. 5 residues coordinate sn-glycerol 3-phosphate: K194, D247, S257, R258, and N259. K194 serves as the catalytic Proton acceptor. R258 provides a ligand contact to NADPH. NADPH contacts are provided by V282 and E284.

It belongs to the NAD-dependent glycerol-3-phosphate dehydrogenase family.

It localises to the cytoplasm. It catalyses the reaction sn-glycerol 3-phosphate + NAD(+) = dihydroxyacetone phosphate + NADH + H(+). It carries out the reaction sn-glycerol 3-phosphate + NADP(+) = dihydroxyacetone phosphate + NADPH + H(+). Its pathway is membrane lipid metabolism; glycerophospholipid metabolism. Functionally, catalyzes the reduction of the glycolytic intermediate dihydroxyacetone phosphate (DHAP) to sn-glycerol 3-phosphate (G3P), the key precursor for phospholipid synthesis. The polypeptide is Glycerol-3-phosphate dehydrogenase [NAD(P)+] (Streptococcus uberis (strain ATCC BAA-854 / 0140J)).